The following is a 359-amino-acid chain: Phosphatidylglycerol--prolipoprotein diacylglyceryl transferase (359 aa).

Transmembrane regions (helical) follow at residues 24 to 44 (VALR…IVWG), 58 to 78 (VLDI…LYHV), 98 to 118 (VWQG…GAWI), and 124 to 144 (GIPL…AQAI). Arg-146 is a binding site for a 1,2-diacyl-sn-glycero-3-phospho-(1'-sn-glycerol). Helical transmembrane passes span 193 to 213 (FVVH…VLLL), 222 to 243 (IGHG…FWIE), and 258 to 278 (VNSF…FAAT). The segment at 284–359 (PAELRPADGG…IDSKKDDAND (76 aa)) is disordered. Positions 306–323 (IAQKEPEKNVEDAGKDEG) are enriched in basic and acidic residues. The span at 336–349 (ASTASTGGEAGTKT) shows a compositional bias: low complexity. Over residues 350-359 (IDSKKDDAND) the composition is skewed to basic and acidic residues.

The protein belongs to the Lgt family.

It is found in the cell membrane. It catalyses the reaction L-cysteinyl-[prolipoprotein] + a 1,2-diacyl-sn-glycero-3-phospho-(1'-sn-glycerol) = an S-1,2-diacyl-sn-glyceryl-L-cysteinyl-[prolipoprotein] + sn-glycerol 1-phosphate + H(+). Its pathway is protein modification; lipoprotein biosynthesis (diacylglyceryl transfer). Functionally, catalyzes the transfer of the diacylglyceryl group from phosphatidylglycerol to the sulfhydryl group of the N-terminal cysteine of a prolipoprotein, the first step in the formation of mature lipoproteins. The chain is Phosphatidylglycerol--prolipoprotein diacylglyceryl transferase from Rhodococcus jostii (strain RHA1).